The sequence spans 353 residues: Pleckstrin-2 (353 aa).

Met1 carries the post-translational modification N-acetylmethionine. A PH 1 domain is found at 4 to 104 (GVLKEGFLVK…WAFEITGAIH (101 aa)). At Ser120 the chain carries Phosphoserine. Positions 139 to 225 (SNTGIRSSPN…DSTALYTFAE (87 aa)) constitute a DEP domain. The PH 2 domain maps to 247–353 (TVVKQGYLAK…EWIEAIKKLT (107 aa)).

Its subcellular location is the cell projection. It localises to the lamellipodium membrane. The protein resides in the cytoplasm. It is found in the cytoskeleton. May help orchestrate cytoskeletal arrangement. Contribute to lamellipodia formation. This chain is Pleckstrin-2 (PLEK2), found in Homo sapiens (Human).